The sequence spans 185 residues: Ribosome-recycling factor (185 aa).

Position 162 is an N6-acetyllysine (Lys-162).

It belongs to the RRF family.

The protein localises to the cytoplasm. Responsible for the release of ribosomes from messenger RNA at the termination of protein biosynthesis. May increase the efficiency of translation by recycling ribosomes from one round of translation to another. The protein is Ribosome-recycling factor of Shigella boydii serotype 18 (strain CDC 3083-94 / BS512).